We begin with the raw amino-acid sequence, 497 residues long: MTETLVAFDDVLASYDPAMGLEVHVELNTASKMFCGCPTEFGAEPNTQVCPTCLGLPGAMPVVNGKAVESAIRIGLALNCEIAEWCRFARKNYFYPDMPKNFQTSQYDEPICFEGYMDVDVDGETFRVEIERAHMEEDTGKSLHVGGATGRIHGADHSLVDYNRAGIPLIEIVTKPIVGAGAKAPEVARAYVAQLRDLIIALGVSDARMDQGSIRADVNLSLSPKDSGTLGTRTETKNVNSLRSVERAVRYEMSRHAGVLDAGRPILQETRHWHEDTGVTTSGREKSDAEDYRYFPEPDLVPVAPTRAWVEELRGTLPENPTQKRARLQAEWGFSDLEMRDTVGAGALLIVEETIAAGASPQAARKWWLGEMARRANEAGVEVGELGVTPVDVARVQVLVDEGKLNDKLARQVFDGLLAGEGSPDEIVAARGLAIVSDEGALSAAVDSAIAANPDVADKIRDGKVAAAGALIGAVMKEMRGQADAARVRELILEKLA.

The protein belongs to the GatB/GatE family. GatB subfamily. As to quaternary structure, heterotrimer of A, B and C subunits.

It catalyses the reaction L-glutamyl-tRNA(Gln) + L-glutamine + ATP + H2O = L-glutaminyl-tRNA(Gln) + L-glutamate + ADP + phosphate + H(+). The enzyme catalyses L-aspartyl-tRNA(Asn) + L-glutamine + ATP + H2O = L-asparaginyl-tRNA(Asn) + L-glutamate + ADP + phosphate + 2 H(+). In terms of biological role, allows the formation of correctly charged Asn-tRNA(Asn) or Gln-tRNA(Gln) through the transamidation of misacylated Asp-tRNA(Asn) or Glu-tRNA(Gln) in organisms which lack either or both of asparaginyl-tRNA or glutaminyl-tRNA synthetases. The reaction takes place in the presence of glutamine and ATP through an activated phospho-Asp-tRNA(Asn) or phospho-Glu-tRNA(Gln). The polypeptide is Aspartyl/glutamyl-tRNA(Asn/Gln) amidotransferase subunit B (Nocardioides sp. (strain ATCC BAA-499 / JS614)).